The chain runs to 159 residues: Dihydrofolate reductase (159 aa).

In terms of domain architecture, DHFR spans 1-158 (MISLIAALAV…HSYCFEILER (158 aa)). Isoleucine 5 contacts substrate. NADP(+)-binding positions include alanine 7 and 13 to 19 (VIGMENA). Aspartate 27 contacts substrate. Position 45-46 (45-46 (LT)) interacts with NADP(+). Substrate contacts are provided by arginine 52 and arginine 57. NADP(+)-binding positions include 63 to 64 (SS), lysine 76, and 95 to 102 (GGGRVYEQ). Threonine 113 is a substrate binding site.

It belongs to the dihydrofolate reductase family.

The enzyme catalyses (6S)-5,6,7,8-tetrahydrofolate + NADP(+) = 7,8-dihydrofolate + NADPH + H(+). It functions in the pathway cofactor biosynthesis; tetrahydrofolate biosynthesis; 5,6,7,8-tetrahydrofolate from 7,8-dihydrofolate: step 1/1. Functionally, key enzyme in folate metabolism. Catalyzes an essential reaction for de novo glycine and purine synthesis, and for DNA precursor synthesis. The protein is Dihydrofolate reductase (folA) of Klebsiella aerogenes (Enterobacter aerogenes).